An 880-amino-acid polypeptide reads, in one-letter code: MPSIVSSLLLVVLLTSPLGAIPVLYPSPPPLPAYPSPGVRILRPPESLVAPLGDEVVLECETSLPPERFEWSYRRWTPNGTAVNGSPGAGFKYLKTSSMKANVTQEAAISRLKVLVRQDTLGEYRCNGWFGPLLVTSTTARLELATTSVKSQEPVTSLQWQITNGNSVLWPCGQPVRSNPAASWTFYRNGVELGPEYSGTGGNLFLRNVSVDSSGSYSCQATNPASGERIKSTSSMELQVVPSRGSQVKAPYLLPGQPGSQTVTAIEGGTLLLLCPGVGSPPPTAVWSSPDIVGAVNNKRTRVLAHALEISNVQIGDSGTYICYLDNGVRPPLEHFIQVKVEQPPQIVRPPWIDMVNEGERVQLECEATGVPTPEIYWLLNGKSSIYDTEAEQLPNGHLVLHSVLKRHAGYVQCFARNSLGEHSAGMSLQVTPKPIHSESTQQSDHNHSKANRGRRPAQMIPPSAPNVTRLSDESVMLRWMVPRNDGLAILFFKVQYRTVGEGKRKNWQTTNENIPYGRPEWNSEMGKSFTASVTDLKPQRTYRFRIMAVYTNNDNKESNMSAKFFLQPGAALDPMPVPEMLEIDEYSETAVVLHWRLDSDADEQLITGYYAYYRPSSSAGEYFKATIEGASSRSFTIGNLEAGTVYEFKLQSFSAESASEFSALKQGRTQRPMVSTTEEATLQTGVRDTTTPSHNETFSMSPIVTGTIGGGAVLILFVVTTCLCMWRRRNSRAHRGGGQNKPRMAELREDFVPLDSCSPTKQRQRSRHIHITLNPLAQQQQQALDEKNDAEHDMTYFQRQPTYDYDPGLRRMSSSSLRRSQRTLERAGSSNGNNNNLNQSADMGPVDNPGKPGRVLMKRPRLSSRSENLSSGSLNSVGV.

The signal sequence occupies residues 1 to 20; that stretch reads MPSIVSSLLLVVLLTSPLGA. Over 21 to 703 the chain is Extracellular; that stretch reads IPVLYPSPPP…SHNETFSMSP (683 aa). Ig-like C2-type domains are found at residues 37 to 142, 154 to 235, 251 to 339, and 345 to 432; these read PGVR…TARL, PVTS…STSS, PYLL…FIQV, and PQIV…LQVT. 4 cysteine pairs are disulfide-bonded: Cys-60–Cys-126, Cys-172–Cys-219, Cys-275–Cys-323, and Cys-366–Cys-414. Asn-79, Asn-102, and Asn-208 each carry an N-linked (GlcNAc...) asparagine glycan. A disordered region spans residues 435–468; the sequence is PIHSESTQQSDHNHSKANRGRRPAQMIPPSAPNV. Asn-447 and Asn-467 each carry an N-linked (GlcNAc...) asparagine glycan. 2 Fibronectin type-III domains span residues 462–570 and 578–673; these read PPSA…LQPG and VPEM…TQRP. Heparin is bound by residues Arg-498, Lys-504, Lys-506, and Arg-544. Asn-560 is a glycosylation site (N-linked (GlcNAc...) asparagine). The disordered stretch occupies residues 665–699; it reads LKQGRTQRPMVSTTEEATLQTGVRDTTTPSHNETF. Positions 668–699 are enriched in polar residues; sequence GRTQRPMVSTTEEATLQTGVRDTTTPSHNETF. The N-linked (GlcNAc...) asparagine glycan is linked to Asn-696. Residues 704-724 form a helical membrane-spanning segment; that stretch reads IVTGTIGGGAVLILFVVTTCL. Residues 725 to 880 are Cytoplasmic-facing; the sequence is CMWRRRNSRA…SSGSLNSVGV (156 aa). Positions 797–880 are disordered; the sequence is YFQRQPTYDY…SSGSLNSVGV (84 aa). Low complexity-rich tracts occupy residues 827-839 and 864-880; these read RAGSSNGNNNNLN and SSRSENLSSGSLNSVGV.

Belongs to the immunoglobulin superfamily. IHOG family. As to quaternary structure, homodimer. Heterotetramer; 2 iHog chains bind 2 hh chains when facilitated by heparin, heparin is required to promote high-affinity interactions between hh and iHog.

The protein localises to the membrane. Mediates response to the active Hedgehog (Hh) protein signal in embryos, functioning upstream or at the level of patched (ptc). The chain is Interference hedgehog from Drosophila ananassae (Fruit fly).